Consider the following 1430-residue polypeptide: Target of rapamycin complex 2 subunit TSC11 (1430 aa).

The disordered stretch occupies residues 1-62 (MSIPHSAKQS…TITNESSKRN (62 aa)). Polar residues-rich tracts occupy residues 7-26 (AKQS…TTPL) and 35-44 (NSSTQISSAK). Ser-19 carries the post-translational modification Phosphoserine. A compositionally biased stretch (low complexity) spans 45–57 (NITSSSPSTITNE). Residues Ser-81, Ser-84, Ser-87, and Ser-141 each carry the phosphoserine modification. The stretch at 91-180 (ARRTRSTMTK…EKHIFDLKQQ (90 aa)) forms a coiled coil. Residues 182–285 (DKKRQRSLTT…NLTGDTEKDL (104 aa)) are disordered. The segment covering 233–265 (TTPTSGTERNSQQNLNRNSTVNSRNNENHSTLS) has biased composition (polar residues). The N-terminal Ras-GEF domain maps to 995–1100 (SVVAVADQAL…FQQKSRLPLH (106 aa)).

The protein belongs to the RICTOR family. In terms of assembly, the target of rapamycin complex 2 (TORC2) is composed of at least AVO1, AVO2, BIT61, LST8, TOR2 and TSC11. TORC2 forms a homodimer. Contrary to TORC1, TORC2 does not bind to and is not sensitive to FKBP-rapamycin. TSC11 binds to the N-terminal HEAT repeat region in TOR2 and is required for TORC2 integrity by tethering AVO1 and AVO2 to the complex. Post-translationally, phosphorylated by TOR2; when part of TORC2.

The protein resides in the cell membrane. Its subcellular location is the vacuole membrane. In terms of biological role, essential component of TORC2, which regulates cell cycle-dependent polarization of the actin-cytoskeleton and cell wall integrity. TORC2 controls polarity of the actin cytoskeleton, which is required for orienting the secretory pathway toward discrete growth sites, via the RHO1/PKC1/MAPK cell integrity pathway. TSC11 may exert its functions through two distinct mechanisms, one mediated by AVO1 and the other mediated by AVO2 and SLM1. This Saccharomyces cerevisiae (strain ATCC 204508 / S288c) (Baker's yeast) protein is Target of rapamycin complex 2 subunit TSC11 (TSC11).